Reading from the N-terminus, the 920-residue chain is Dynamin-2B (920 aa).

Met1 is subject to N-acetylmethionine. Residues 35–303 (PATSLNVVAL…IRSRMKLRLP (269 aa)) form the Dynamin-type G domain. Residues 45–52 (GNVGAGKS) form a G1 motif region. 45-53 (GNVGAGKSA) is a GTP binding site. Residues 71 to 73 (ATR) form a G2 motif region. The segment at 143-146 (DLPG) is G3 motif. Residues 204 to 207 (SKID) form a G4 motif region. 204–210 (SKIDQAA) lines the GTP pocket. Residues 238–241 (ALIG) are G5 motif. 246 to 249 (IASA) serves as a coordination point for GTP. Over residues 507 to 522 (RREEELKGRSSKKGQD) the composition is skewed to basic and acidic residues. 2 disordered regions span residues 507–577 (RREE…TAGP) and 632–657 (IEEISDDEGEKSKSSKDKKSNGPDSK). Residues 523 to 545 (AEQSLLNRATSPQPDGPSSTGGS) are compositionally biased toward polar residues. Basic and acidic residues-rich tracts occupy residues 548-567 (SLRDKLMPQDKDKDKEKETP) and 641-652 (EKSKSSKDKKSN). The PH domain occupies 579–703 (GEITAGYLMK…WINKLQKVIQ (125 aa)). The GED domain maps to 737–830 (LRWMSQEVRG…QLSIHDNRAA (94 aa)). Residues 747–761 (YVEAVLNSLAANVPK) form an important for homodimerization region. Residues 788–812 (NERIESLIQEDQNVKRRRDRYQKQS) adopt a coiled-coil conformation. Positions 828–920 (RAAAASSWSD…PPQSGSSYRY (93 aa)) are disordered. Residues 833 to 849 (SSWSDNSGTESSPRTNG) show a composition bias toward polar residues.

The protein belongs to the TRAFAC class dynamin-like GTPase superfamily. Dynamin/Fzo/YdjA family. In terms of assembly, interacts with DRP1A at the plasma membrane and in forming clathrin-coated vesicles (CCV). As to expression, ubiquitous. Preferentially expressed in siliques.

It is found in the cytoplasm. The protein resides in the cytoskeleton. Its subcellular location is the cytoplasmic vesicle. It localises to the clathrin-coated vesicle. The protein localises to the cell membrane. It catalyses the reaction GTP + H2O = GDP + phosphate + H(+). Functionally, putative microtubule-associated force-producing protein, able to bind and hydrolyze GTP. Collaboratively with DRP1A, participates in clathrin-coated vesicle formation during endocytosis. With DRP1A and PIP5K3, required for the precise coordination of polar ARAC3/ROP6 and ARAC4/ROP2 placement and subsequent root hair positioning during planar polarity formation in root hair-forming cells. This Arabidopsis thaliana (Mouse-ear cress) protein is Dynamin-2B.